A 188-amino-acid chain; its full sequence is Acireductone dioxygenase (188 aa).

Positions 97, 99, 103, and 141 each coordinate Fe(2+). Residues His97, His99, Glu103, and His141 each coordinate Ni(2+).

The protein belongs to the acireductone dioxygenase (ARD) family. Monomer. It depends on Fe(2+) as a cofactor. Requires Ni(2+) as cofactor.

The catalysed reaction is 1,2-dihydroxy-5-(methylsulfanyl)pent-1-en-3-one + O2 = 3-(methylsulfanyl)propanoate + CO + formate + 2 H(+). It catalyses the reaction 1,2-dihydroxy-5-(methylsulfanyl)pent-1-en-3-one + O2 = 4-methylsulfanyl-2-oxobutanoate + formate + 2 H(+). It participates in amino-acid biosynthesis; L-methionine biosynthesis via salvage pathway; L-methionine from S-methyl-5-thio-alpha-D-ribose 1-phosphate: step 5/6. Catalyzes 2 different reactions between oxygen and the acireductone 1,2-dihydroxy-3-keto-5-methylthiopentene (DHK-MTPene) depending upon the metal bound in the active site. Fe-containing acireductone dioxygenase (Fe-ARD) produces formate and 2-keto-4-methylthiobutyrate (KMTB), the alpha-ketoacid precursor of methionine in the methionine recycle pathway. Ni-containing acireductone dioxygenase (Ni-ARD) produces methylthiopropionate, carbon monoxide and formate, and does not lie on the methionine recycle pathway. The sequence is that of Acireductone dioxygenase from Gluconobacter oxydans (strain 621H) (Gluconobacter suboxydans).